The primary structure comprises 126 residues: Protein Wnt-7(II) (126 aa).

S1 carries O-palmitoleoyl serine; by PORCN lipidation. C92 and C107 are joined by a disulfide. A glycan (N-linked (GlcNAc...) asparagine) is linked at N93.

It belongs to the Wnt family. In terms of processing, palmitoleoylation is required for efficient binding to frizzled receptors. Depalmitoleoylation leads to Wnt signaling pathway inhibition.

It is found in the secreted. It localises to the extracellular space. The protein resides in the extracellular matrix. Ligand for members of the frizzled family of seven transmembrane receptors. Probable developmental protein. May be a signaling molecule which affects the development of discrete regions of tissues. Is likely to signal over only few cell diameters. The sequence is that of Protein Wnt-7(II) (WNT-7(II)) from Eptatretus stoutii (Pacific hagfish).